Reading from the N-terminus, the 201-residue chain is 3-isopropylmalate dehydratase small subunit (201 aa).

The protein belongs to the LeuD family. LeuD type 1 subfamily. As to quaternary structure, heterodimer of LeuC and LeuD.

The catalysed reaction is (2R,3S)-3-isopropylmalate = (2S)-2-isopropylmalate. The protein operates within amino-acid biosynthesis; L-leucine biosynthesis; L-leucine from 3-methyl-2-oxobutanoate: step 2/4. Functionally, catalyzes the isomerization between 2-isopropylmalate and 3-isopropylmalate, via the formation of 2-isopropylmaleate. The polypeptide is 3-isopropylmalate dehydratase small subunit (Parvibaculum lavamentivorans (strain DS-1 / DSM 13023 / NCIMB 13966)).